Here is a 760-residue protein sequence, read N- to C-terminus: 5-methyltetrahydropteroyltriglutamate--homocysteine methyltransferase (760 aa).

Residues 17 to 20 (RELK) and K118 contribute to the 5-methyltetrahydropteroyltri-L-glutamate site. Residues 434–436 (IGS) and E487 each bind L-homocysteine. Residues 434-436 (IGS) and E487 contribute to the L-methionine site. 5-methyltetrahydropteroyltri-L-glutamate-binding positions include 518–519 (RC) and W564. D602 is a binding site for L-homocysteine. L-methionine is bound at residue D602. A 5-methyltetrahydropteroyltri-L-glutamate-binding site is contributed by E608. Residues H644, C646, and E668 each coordinate Zn(2+). Residue H697 is the Proton donor of the active site. C729 lines the Zn(2+) pocket.

Belongs to the vitamin-B12 independent methionine synthase family. Zn(2+) is required as a cofactor.

It catalyses the reaction 5-methyltetrahydropteroyltri-L-glutamate + L-homocysteine = tetrahydropteroyltri-L-glutamate + L-methionine. It functions in the pathway amino-acid biosynthesis; L-methionine biosynthesis via de novo pathway; L-methionine from L-homocysteine (MetE route): step 1/1. Functionally, catalyzes the transfer of a methyl group from 5-methyltetrahydrofolate to homocysteine resulting in methionine formation. The protein is 5-methyltetrahydropteroyltriglutamate--homocysteine methyltransferase of Buchnera aphidicola subsp. Cinara cedri (strain Cc).